The sequence spans 530 residues: Cytochrome P450 78A6 (530 aa).

A helical membrane pass occupies residues 25 to 45 (LAFSLLAVTIIWLAISLFLWT). Cys474 contributes to the heme binding site.

The protein belongs to the cytochrome P450 family. Heme is required as a cofactor. In terms of tissue distribution, expressed in leaves, sepals, petals, stamens, carpels and developing ovules.

Its subcellular location is the membrane. Its function is as follows. Plays a role in seed and fruit development. Functions probably in association with CYP78A9 in the regulation of seed growth. Acts maternally to promote seed growth. This is Cytochrome P450 78A6 (CYP78A6) from Arabidopsis thaliana (Mouse-ear cress).